A 207-amino-acid polypeptide reads, in one-letter code: Large ribosomal subunit protein uL4 (207 aa).

Positions 43-52 are enriched in polar residues; sequence NKRQGTQSAK. The disordered stretch occupies residues 43–72; the sequence is NKRQGTQSAKTRAEVRGGGRKPWKQKGTGR. Basic residues predominate over residues 60 to 71; that stretch reads GGRKPWKQKGTG.

The protein belongs to the universal ribosomal protein uL4 family. Part of the 50S ribosomal subunit.

One of the primary rRNA binding proteins, this protein initially binds near the 5'-end of the 23S rRNA. It is important during the early stages of 50S assembly. It makes multiple contacts with different domains of the 23S rRNA in the assembled 50S subunit and ribosome. Functionally, forms part of the polypeptide exit tunnel. In Alkaliphilus metalliredigens (strain QYMF), this protein is Large ribosomal subunit protein uL4.